The primary structure comprises 127 residues: Small ribosomal subunit protein uS13 (127 aa).

Over residues 96-118 (LPVRGQRTHTNARTRKGPKRGIV) the composition is skewed to basic residues. Residues 96–127 (LPVRGQRTHTNARTRKGPKRGIVRAKPAAPAR) are disordered.

This sequence belongs to the universal ribosomal protein uS13 family. In terms of assembly, part of the 30S ribosomal subunit. Forms a loose heterodimer with protein S19. Forms two bridges to the 50S subunit in the 70S ribosome.

Its function is as follows. Located at the top of the head of the 30S subunit, it contacts several helices of the 16S rRNA. In the 70S ribosome it contacts the 23S rRNA (bridge B1a) and protein L5 of the 50S subunit (bridge B1b), connecting the 2 subunits; these bridges are implicated in subunit movement. Contacts the tRNAs in the A and P-sites. This Myxococcus xanthus (strain DK1622) protein is Small ribosomal subunit protein uS13.